The chain runs to 127 residues: Glycine cleavage system H protein (127 aa).

The region spanning 22 to 104 (EAVIGITQFA…YTDGWMVRVK (83 aa)) is the Lipoyl-binding domain. Lys-63 bears the N6-lipoyllysine mark.

It belongs to the GcvH family. The glycine cleavage system is composed of four proteins: P, T, L and H. It depends on (R)-lipoate as a cofactor.

The glycine cleavage system catalyzes the degradation of glycine. The H protein shuttles the methylamine group of glycine from the P protein to the T protein. This chain is Glycine cleavage system H protein, found in Nitratidesulfovibrio vulgaris (strain DSM 19637 / Miyazaki F) (Desulfovibrio vulgaris).